A 911-amino-acid polypeptide reads, in one-letter code: MVDYHAANQAYQYGPSSGGNGTGGGGGMGDYMAQEDDWDRDLLLDPAWEKQQRKTFTAWCNSHLRKAGTQIENIDEDFRDGLKLMLLLEVISGERLPKPERGKMRVHKINNVNKALDFIASKGVKLVSIGAEEIVDGNAKMTLGMIWTIILRFAIQDISVEETSAKEGLLLWCQRKTAPYKNVNVQNFHISWKDGLAFNALIHRHRPELIEYDKLRKDDPVTNLNNAFEVAEKYLDIPKMLDAEDIVNTARPDEKAIMTYVSSFYHAFSGAQKAETAANRICKVLAVNQENEHLMEDYERLASDLLEWIRRTIPWLEDRVPQKTIQEMQQKLEDFRDYRRVHKPPKVQEKCQLEINFNTLQTKLRLSNRPAFMPSEGRMVSDINNGWQHLEQAEKGYEEWLLNEIRRLERLDHLAEKFRQKASIHEAWTDGKEAMLKHRDYETATLSDIKALIRKHEAFESDLAAHQDRVEQIAAIAQELNELDYYDSHNVNTRCQKICDQWDNLGSLTHSRREALEKTEKQLETIDQLHLEYAKRAAPFNNWMESAMEDLQDMFIVHTIEEIEGLISAHDQFKSTLPDADREREAILAIHKEAQRIAESNHIKLSGSNPYTSVTPQIINSKWEKVQQLVPKRDHALLEEQSKQQSNEHLRRQFASQANMVGPWIQTKMEEIGRISIEMNGTLEDQLSHLKQYERSIVDYKPNLDLLEQQHQLIQEALIFDNKHTNYTMEHLRVGWEQLLTTIARTINEVENQILTRDAKGISQEQMQEFRASFNHFDKDHGGALGPEEFKACLISLGYDVENDRQGDAEFNRIMSVVDPNHSGLVTFQAFIDFMSRETTDTDTADQVIASFKVLAGDKNFITAEELRRELPPDQAEYCIARMAPYQGPDAAPGALDYKSFSTALYGESDL.

Positions Met-1–Ser-269 are actin-binding. An interaction with VCL region spans residues Gln-12–Gly-26. The tract at residues Gln-12–Tyr-31 is disordered. Positions Ser-16–Gly-29 are enriched in gly residues. Tyr-31 carries the phosphotyrosine modification. The segment at Arg-40 to Asn-61 is interaction with VCL. Calponin-homology (CH) domains lie at Lys-50–Ala-154 and Thr-163–Ser-269. The short motif at Leu-84 to Leu-88 is the LXXLL motif element. Residues Lys-108–Leu-126 form an interaction with VCL region. N6-acetyllysine is present on Lys-114. Positions Thr-177 to Trp-192 are polyphosphoinositide (PIP2)-binding. Residue Lys-214 is modified to N6-acetyllysine. Thr-249 carries the phosphothreonine modification. Spectrin repeat units follow at residues His-293–Asn-403, His-413–Lys-518, Gln-528–Glu-639, and His-649–Asn-752. N6-acetyllysine occurs at positions 592 and 625. Ser-696 carries the phosphoserine modification. Positions Trp-736 to Leu-911 are mediates interaction with MICALL2. EF-hand domains lie at Glu-765–Asp-800 and Gln-806–Asp-841. Position 778 (Asp-778) interacts with Ca(2+). N6-acetyllysine is present on Lys-779. Positions 780 and 789 each coordinate Ca(2+). Lys-859 is modified (N6-acetyllysine). At Ser-909 the chain carries Phosphoserine.

Belongs to the alpha-actinin family. In terms of assembly, homodimer; antiparallel. Interacts with MAGI1. Interacts with MICALL2 (preferentially in opened conformation); stimulated by RAB13 activation. Identified in a IGF2BP1-dependent mRNP granule complex containing untranslated mRNAs. Component of the CART complex, at least composed of ACTN4, HGS/HRS, MYO5B and TRIM3. Binds TRIM3 at the N-terminus. Interacts with PDLIM2. Identified in a complex with CASK, IQGAP1, MAGI2, NPHS1, SPTAN1 and SPTBN1. Interacts with PPARG and RARA. Binds to VCL; this interaction triggers VCL conformational changes. Interacts with SEPTIN14. Interacts with IGSF8. As to expression, expressed in the foot process layer of podocytes in the kidney glomerulus but not in tubules (at protein level).

Its subcellular location is the nucleus. The protein localises to the cytoplasm. It is found in the cell junction. The protein resides in the cytoskeleton. It localises to the stress fiber. Its subcellular location is the perinuclear region. Functionally, F-actin cross-linking protein which is thought to anchor actin to a variety of intracellular structures. This is a bundling protein. Probably involved in vesicular trafficking via its association with the CART complex. The CART complex is necessary for efficient transferrin receptor recycling but not for EGFR degradation. Involved in tight junction assembly in epithelial cells probably through interaction with MICALL2. Links MICALL2 to the actin cytoskeleton and recruits it to the tight junctions. May also function as a transcriptional coactivator, stimulating transcription mediated by the nuclear hormone receptors PPARG and RARA. Association with IGSF8 regulates the immune synapse formation and is required for efficient T-cell activation. The polypeptide is Alpha-actinin-4 (Rattus norvegicus (Rat)).